The following is a 161-amino-acid chain: Ribosome maturation factor RimP (161 aa).

The protein belongs to the RimP family.

The protein resides in the cytoplasm. Functionally, required for maturation of 30S ribosomal subunits. This is Ribosome maturation factor RimP from Pelobacter propionicus (strain DSM 2379 / NBRC 103807 / OttBd1).